We begin with the raw amino-acid sequence, 231 residues long: uncharacterized protein (231 aa).

10-34 is a binding site for NADP(+); sequence VVTGAGSGIGEAIATLLHEEGAKVV. Position 140 (serine 140) interacts with substrate. Tyrosine 153 (proton acceptor) is an active-site residue.

It belongs to the short-chain dehydrogenases/reductases (SDR) family.

This is an uncharacterized protein from Staphylococcus aureus (strain COL).